The following is a 150-amino-acid chain: Cytochrome c-type biogenesis protein CcmE (150 aa).

Over 1–7 the chain is Cytoplasmic; sequence MTRKQKR. Residues 8-28 traverse the membrane as a helical; Signal-anchor for type II membrane protein segment; the sequence is LAIIGGGVGFLTAAVLLVMFA. At 29–150 the chain is on the periplasmic side; the sequence is FSQAVAYFYV…VTLGGEENIR (122 aa). Heme-binding residues include His-123 and Tyr-127.

This sequence belongs to the CcmE/CycJ family.

It is found in the cell inner membrane. In terms of biological role, heme chaperone required for the biogenesis of c-type cytochromes. Transiently binds heme delivered by CcmC and transfers the heme to apo-cytochromes in a process facilitated by CcmF and CcmH. In Sinorhizobium medicae (strain WSM419) (Ensifer medicae), this protein is Cytochrome c-type biogenesis protein CcmE.